We begin with the raw amino-acid sequence, 127 residues long: Glycine cleavage system H protein (127 aa).

Residues 24 to 105 form the Lipoyl-binding domain; it reads TALVGITDFA…YNDGWLVKMK (82 aa). Lysine 65 bears the N6-lipoyllysine mark.

It belongs to the GcvH family. As to quaternary structure, the glycine cleavage system is composed of four proteins: P, T, L and H. (R)-lipoate is required as a cofactor.

The glycine cleavage system catalyzes the degradation of glycine. The H protein shuttles the methylamine group of glycine from the P protein to the T protein. The sequence is that of Glycine cleavage system H protein from Pelodictyon phaeoclathratiforme (strain DSM 5477 / BU-1).